The primary structure comprises 286 residues: Phosphate import ATP-binding protein PstB (286 aa).

The ABC transporter domain maps to 40-281; the sequence is IAVRNLDFYY…PREQRTQEYI (242 aa). 72–79 is a binding site for ATP; it reads GPSGCGKS.

It belongs to the ABC transporter superfamily. Phosphate importer (TC 3.A.1.7) family. In terms of assembly, the complex is composed of two ATP-binding proteins (PstB), two transmembrane proteins (PstC and PstA) and a solute-binding protein (PstS).

Its subcellular location is the cell inner membrane. It carries out the reaction phosphate(out) + ATP + H2O = ADP + 2 phosphate(in) + H(+). Part of the ABC transporter complex PstSACB involved in phosphate import. Responsible for energy coupling to the transport system. The sequence is that of Phosphate import ATP-binding protein PstB from Granulibacter bethesdensis (strain ATCC BAA-1260 / CGDNIH1).